The chain runs to 721 residues: Phosphoribosylformylglycinamidine synthase subunit PurL (721 aa).

The active site involves His47. ATP is bound by residues Tyr50 and Lys89. Residue Glu91 participates in Mg(2+) binding. Substrate contacts are provided by residues 92–95 and Arg114; that span reads SHNH. His93 acts as the Proton acceptor in catalysis. Asp115 contributes to the Mg(2+) binding site. Gln238 contacts substrate. Asp266 lines the Mg(2+) pocket. 310 to 312 is a substrate binding site; sequence ESQ. Asp490 and Gly527 together coordinate ATP. Asn528 lines the Mg(2+) pocket. Ser530 serves as a coordination point for substrate.

This sequence belongs to the FGAMS family. As to quaternary structure, monomer. Part of the FGAM synthase complex composed of 1 PurL, 1 PurQ and 2 PurS subunits.

Its subcellular location is the cytoplasm. It carries out the reaction N(2)-formyl-N(1)-(5-phospho-beta-D-ribosyl)glycinamide + L-glutamine + ATP + H2O = 2-formamido-N(1)-(5-O-phospho-beta-D-ribosyl)acetamidine + L-glutamate + ADP + phosphate + H(+). It functions in the pathway purine metabolism; IMP biosynthesis via de novo pathway; 5-amino-1-(5-phospho-D-ribosyl)imidazole from N(2)-formyl-N(1)-(5-phospho-D-ribosyl)glycinamide: step 1/2. Part of the phosphoribosylformylglycinamidine synthase complex involved in the purines biosynthetic pathway. Catalyzes the ATP-dependent conversion of formylglycinamide ribonucleotide (FGAR) and glutamine to yield formylglycinamidine ribonucleotide (FGAM) and glutamate. The FGAM synthase complex is composed of three subunits. PurQ produces an ammonia molecule by converting glutamine to glutamate. PurL transfers the ammonia molecule to FGAR to form FGAM in an ATP-dependent manner. PurS interacts with PurQ and PurL and is thought to assist in the transfer of the ammonia molecule from PurQ to PurL. In Ruegeria sp. (strain TM1040) (Silicibacter sp.), this protein is Phosphoribosylformylglycinamidine synthase subunit PurL.